The sequence spans 291 residues: Beta-lactamase CTX-M-14 (291 aa).

A signal peptide spans 1–28; sequence MVTKRVQRMMFAAAACIPLLLGSAPLYA. Serine 73 (nucleophile; acyl-ester intermediate) is an active-site residue. Lysine 76, serine 133, glutamate 169, and serine 240 together coordinate a beta-lactam.

The protein belongs to the class-A beta-lactamase family. As to quaternary structure, monomer.

Its subcellular location is the secreted. It catalyses the reaction a beta-lactam + H2O = a substituted beta-amino acid. Inhibited by the beta-lactamase-blocking agents clavulanic acid, tazobactam and sulbactam. In terms of biological role, extended-spectrum beta-lactamase (ESBL) which confers resistance to penicillins, as well as first, second, and third-generation cephalosporins. Has cefotaxime-hydrolyzing activity. The protein is Beta-lactamase CTX-M-14 of Escherichia coli.